A 104-amino-acid chain; its full sequence is Ig lambda-2 chain C region (104 aa).

The Ig-like domain occupies 6–99; the sequence is PTLTVFPPSS…EGDTVEKSLS (94 aa). Cysteines 27 and 85 form a disulfide.

The protein is Ig lambda-2 chain C region (Iglc2) of Mus musculus (Mouse).